The primary structure comprises 330 residues: Methionyl-tRNA formyltransferase (330 aa).

Residue S116 to P119 participates in (6S)-5,6,7,8-tetrahydrofolate binding.

This sequence belongs to the Fmt family.

It catalyses the reaction L-methionyl-tRNA(fMet) + (6R)-10-formyltetrahydrofolate = N-formyl-L-methionyl-tRNA(fMet) + (6S)-5,6,7,8-tetrahydrofolate + H(+). Attaches a formyl group to the free amino group of methionyl-tRNA(fMet). The formyl group appears to play a dual role in the initiator identity of N-formylmethionyl-tRNA by promoting its recognition by IF2 and preventing the misappropriation of this tRNA by the elongation apparatus. This Nitratidesulfovibrio vulgaris (strain DP4) (Desulfovibrio vulgaris) protein is Methionyl-tRNA formyltransferase.